A 117-amino-acid chain; its full sequence is Pterin-4-alpha-carbinolamine dehydratase 2 (117 aa).

An N6-acetyllysine; alternate mark is found at Lys-101, Lys-105, and Lys-112. 3 positions are modified to N6-succinyllysine; alternate: Lys-101, Lys-105, and Lys-112.

Belongs to the pterin-4-alpha-carbinolamine dehydratase family. Homotetramer. Interacts with DYRK1B.

The catalysed reaction is (4aS,6R)-4a-hydroxy-L-erythro-5,6,7,8-tetrahydrobiopterin = (6R)-L-erythro-6,7-dihydrobiopterin + H2O. Its function is as follows. Involved in tetrahydrobiopterin biosynthesis. Seems to both prevent the formation of 7-pterins and accelerate the formation of quinonoid-BH2. In terms of biological role, regulates the dimerization of homeodomain protein HNF-1-alpha and enhances its transcriptional activity. The protein is Pterin-4-alpha-carbinolamine dehydratase 2 (PCBD2) of Pongo abelii (Sumatran orangutan).